The chain runs to 130 residues: Iron-sulfur cluster assembly 1 homolog, mitochondrial (130 aa).

The N-terminal 24 residues, 1-24, are a transit peptide targeting the mitochondrion; it reads MATRVVATATVRAVKGRKLIPTRA. C58, C122, and C124 together coordinate Fe cation.

This sequence belongs to the HesB/IscA family. As to quaternary structure, interacts with cry. Detected in head.

Its subcellular location is the mitochondrion. Functionally, involved in the assembly of mitochondrial iron-sulfur proteins. Probably involved in the binding of an intermediate of Fe/S cluster assembly. Required for maintenance of circadian rhythms under constant darkness. The protein is Iron-sulfur cluster assembly 1 homolog, mitochondrial of Drosophila melanogaster (Fruit fly).